The following is a 347-amino-acid chain: DnaJ protein ERDJ3B (347 aa).

Residues 1 to 23 form the signal peptide; sequence MAAPRWIGPLLLLLLHFVAAVAG. The 66-residue stretch at 25–90 folds into the J domain; that stretch reads SYYDVLQVPK…EKRKIYDRYG (66 aa).

Interacts with BIP1.

The protein resides in the endoplasmic reticulum. Functionally, may play a role in protein folding in the endoplasmic reticulum. This is DnaJ protein ERDJ3B from Oryza sativa subsp. japonica (Rice).